A 123-amino-acid polypeptide reads, in one-letter code: Small ribosomal subunit protein uS12 (123 aa).

Asp-89 carries the 3-methylthioaspartic acid modification.

Belongs to the universal ribosomal protein uS12 family. Part of the 30S ribosomal subunit. Contacts proteins S8 and S17. May interact with IF1 in the 30S initiation complex.

With S4 and S5 plays an important role in translational accuracy. Functionally, interacts with and stabilizes bases of the 16S rRNA that are involved in tRNA selection in the A site and with the mRNA backbone. Located at the interface of the 30S and 50S subunits, it traverses the body of the 30S subunit contacting proteins on the other side and probably holding the rRNA structure together. The combined cluster of proteins S8, S12 and S17 appears to hold together the shoulder and platform of the 30S subunit. The chain is Small ribosomal subunit protein uS12 from Trichlorobacter lovleyi (strain ATCC BAA-1151 / DSM 17278 / SZ) (Geobacter lovleyi).